Reading from the N-terminus, the 179-residue chain is 3-hydroxyanthranilate 3,4-dioxygenase 2 (179 aa).

Residue Arg-44 participates in O2 binding. Positions 48, 60, and 99 each coordinate Fe cation. Glu-60 is a substrate binding site. Residues Arg-103 and Glu-113 each contribute to the substrate site.

Belongs to the 3-HAO family. Fe(2+) serves as cofactor.

The protein localises to the cytoplasm. The enzyme catalyses 3-hydroxyanthranilate + O2 = (2Z,4Z)-2-amino-3-carboxymuconate 6-semialdehyde. It functions in the pathway cofactor biosynthesis; NAD(+) biosynthesis; quinolinate from L-kynurenine: step 3/3. In terms of biological role, catalyzes the oxidative ring opening of 3-hydroxyanthranilate to 2-amino-3-carboxymuconate semialdehyde, which spontaneously cyclizes to quinolinate. The sequence is that of 3-hydroxyanthranilate 3,4-dioxygenase 2 (bna1-2) from Aspergillus oryzae (strain ATCC 42149 / RIB 40) (Yellow koji mold).